Consider the following 195-residue polypeptide: Peptidyl-tRNA hydrolase (195 aa).

Tyr-18 is a tRNA binding site. The active-site Proton acceptor is the His-23. Residues Tyr-69, Asn-71, and Asn-117 each contribute to the tRNA site.

Belongs to the PTH family. As to quaternary structure, monomer.

It localises to the cytoplasm. It catalyses the reaction an N-acyl-L-alpha-aminoacyl-tRNA + H2O = an N-acyl-L-amino acid + a tRNA + H(+). In terms of biological role, hydrolyzes ribosome-free peptidyl-tRNAs (with 1 or more amino acids incorporated), which drop off the ribosome during protein synthesis, or as a result of ribosome stalling. Its function is as follows. Catalyzes the release of premature peptidyl moieties from peptidyl-tRNA molecules trapped in stalled 50S ribosomal subunits, and thus maintains levels of free tRNAs and 50S ribosomes. This is Peptidyl-tRNA hydrolase from Nitrosomonas eutropha (strain DSM 101675 / C91 / Nm57).